The sequence spans 537 residues: NEDD4-binding protein 3 (537 aa).

The residue at position 172 (Ser172) is a Phosphoserine. 3 disordered regions span residues Leu173–Cys234, Lys328–Trp361, and Gln423–Ala458. A compositionally biased stretch (low complexity) spans Pro178–Gly207. Residues Val295–Gln501 adopt a coiled-coil conformation. The segment covering Pro351–Trp361 has biased composition (basic and acidic residues).

It belongs to the N4BP3 family. In terms of assembly, binds NEDD4. Interacts with 14-3-3 proteins. Interacts with MAVS.

It is found in the cytoplasmic vesicle. Its subcellular location is the cell projection. It localises to the axon. The protein resides in the dendrite. Functionally, plays a positive role in the antiviral innate immune signaling pathway. Mechanistically, interacts with MAVS and functions as a positive regulator to promote 'Lys-63'-linked polyubiquitination of MAVS and thus strengthens the interaction between MAVS and TRAF2. Also plays a role in axon and dendrite arborization during cranial nerve development. May also be important for neural crest migration and early development of other anterior structures including eye, brain and cranial cartilage. The sequence is that of NEDD4-binding protein 3 (N4bp3) from Mus musculus (Mouse).